Here is a 110-residue protein sequence, read N- to C-terminus: Large ribosomal subunit protein uL22 (110 aa).

The protein belongs to the universal ribosomal protein uL22 family. As to quaternary structure, part of the 50S ribosomal subunit.

Its function is as follows. This protein binds specifically to 23S rRNA; its binding is stimulated by other ribosomal proteins, e.g. L4, L17, and L20. It is important during the early stages of 50S assembly. It makes multiple contacts with different domains of the 23S rRNA in the assembled 50S subunit and ribosome. In terms of biological role, the globular domain of the protein is located near the polypeptide exit tunnel on the outside of the subunit, while an extended beta-hairpin is found that lines the wall of the exit tunnel in the center of the 70S ribosome. The protein is Large ribosomal subunit protein uL22 of Geobacter metallireducens (strain ATCC 53774 / DSM 7210 / GS-15).